The primary structure comprises 241 residues: Carboxy-S-adenosyl-L-methionine synthase (241 aa).

S-adenosyl-L-methionine is bound by residues Tyr-38, 63-65 (GCS), 88-89 (DN), 116-117 (DI), Asn-131, and Arg-198.

This sequence belongs to the class I-like SAM-binding methyltransferase superfamily. Cx-SAM synthase family. Homodimer.

It catalyses the reaction prephenate + S-adenosyl-L-methionine = carboxy-S-adenosyl-L-methionine + 3-phenylpyruvate + H2O. In terms of biological role, catalyzes the conversion of S-adenosyl-L-methionine (SAM) to carboxy-S-adenosyl-L-methionine (Cx-SAM). The protein is Carboxy-S-adenosyl-L-methionine synthase of Pseudoalteromonas translucida (strain TAC 125).